Here is a 124-residue protein sequence, read N- to C-terminus: Fluoride-specific ion channel FluC (124 aa).

The next 4 helical transmembrane spans lie at 1 to 21 (MFNLLLVVVGGGIGAGIRHLT), 35 to 55 (WGTMAINIVGSFAMGLFIAIL), 66 to 86 (LFVATGIFGGFTTFSAFSLDF), and 99 to 119 (FGYALASVIGAIIALFLGLWL). Na(+) contacts are provided by Gly-74 and Thr-77.

It belongs to the fluoride channel Fluc/FEX (TC 1.A.43) family.

It is found in the cell inner membrane. The enzyme catalyses fluoride(in) = fluoride(out). Its activity is regulated as follows. Na(+) is not transported, but it plays an essential structural role and its presence is essential for fluoride channel function. Fluoride-specific ion channel. Important for reducing fluoride concentration in the cell, thus reducing its toxicity. The polypeptide is Fluoride-specific ion channel FluC (Mesorhizobium japonicum (strain LMG 29417 / CECT 9101 / MAFF 303099) (Mesorhizobium loti (strain MAFF 303099))).